The primary structure comprises 238 residues: MIYAGILAGGIGSRMGNVPLPKQFLDIDNKPILIHTIEKFILVSEFNEIIIATPAQWISHTQDILKKYNITDQRVKVVAGGTDRNETIMNIIDYIRNVNGINNDDVIVTHDAVRPFLTQRIIKENIEVAEKYGAVDTVIEAIDTIVMSKDKQNIHSIPVRNEMYQGQTPQSFNIKLLQDSYRALSSAQKEILSDACKIIVESGHPVKLVRGELYNIKVTTPYDLKVANAIIQGDIADD.

CTP contacts are provided by residues 7–10 (LAGG) and 81–87 (GTDRNET).

Belongs to the IspD/TarI cytidylyltransferase family. TarI subfamily.

The catalysed reaction is D-ribitol 5-phosphate + CTP + H(+) = CDP-L-ribitol + diphosphate. It participates in cell wall biogenesis; poly(ribitol phosphate) teichoic acid biosynthesis. Functionally, catalyzes the transfer of the cytidylyl group of CTP to D-ribitol 5-phosphate. The polypeptide is Ribitol-5-phosphate cytidylyltransferase 2 (Staphylococcus aureus (strain MSSA476)).